The chain runs to 62 residues: Large ribosomal subunit protein bL28 (62 aa).

The protein belongs to the bacterial ribosomal protein bL28 family.

This Helicobacter pylori (strain P12) protein is Large ribosomal subunit protein bL28.